Here is a 439-residue protein sequence, read N- to C-terminus: 26S rRNA (cytosine-C(5))-methyltransferase nsun-5 (439 aa).

S-adenosyl-L-methionine-binding residues include Asp-266, Asp-293, and Asp-313. Catalysis depends on Cys-366, which acts as the Nucleophile.

This sequence belongs to the class I-like SAM-binding methyltransferase superfamily. RsmB/NOP family.

It catalyses the reaction a cytidine in 26S rRNA + S-adenosyl-L-methionine = a 5-methylcytidine in 26S rRNA + S-adenosyl-L-homocysteine + H(+). Its function is as follows. S-adenosyl-L-methionine-dependent methyltransferase which methylates the carbon-5 position of cytosine 2381 to 5-methylcytosine (m5C2381) in 26S rRNA. Plays a role in the production of mature 5S, 5.8S, 18S and 26S rRNAs and promotes the processing of the internally transcribed spacer 2 (ITS2), which separates the 5.8S and 26S rRNAs on large pre-rRNA precursors. May play a role in the translation of leucine and proline codons. May play a role in maintaining ribosomal frameshifting in response to osmotic stress. Not required for global translation. The protein is 26S rRNA (cytosine-C(5))-methyltransferase nsun-5 of Caenorhabditis elegans.